We begin with the raw amino-acid sequence, 394 residues long: Elongation factor Tu 1 (394 aa).

Residues 10-204 (KPHVNVGTIG…FLDSYIPEPE (195 aa)) enclose the tr-type G domain. The G1 stretch occupies residues 19-26 (GHVDHGKT). 19–26 (GHVDHGKT) provides a ligand contact to GTP. Mg(2+) is bound at residue T26. A G2 region spans residues 60 to 64 (GITIN). A G3 region spans residues 81–84 (DCPG). GTP is bound by residues 81-85 (DCPGH) and 136-139 (NKCD). Residues 136–139 (NKCD) form a G4 region. Residues 174 to 176 (SAL) form a G5 region.

This sequence belongs to the TRAFAC class translation factor GTPase superfamily. Classic translation factor GTPase family. EF-Tu/EF-1A subfamily. As to quaternary structure, monomer.

The protein localises to the cytoplasm. It carries out the reaction GTP + H2O = GDP + phosphate + H(+). GTP hydrolase that promotes the GTP-dependent binding of aminoacyl-tRNA to the A-site of ribosomes during protein biosynthesis. In Shigella flexneri serotype 5b (strain 8401), this protein is Elongation factor Tu 1.